Here is a 188-residue protein sequence, read N- to C-terminus: Elongation factor P (188 aa).

N6-(3,6-diaminohexanoyl)-5-hydroxylysine is present on Lys34.

The protein belongs to the elongation factor P family. May be beta-lysylated on the epsilon-amino group of Lys-34 by the combined action of EpmA and EpmB, and then hydroxylated on the C5 position of the same residue by EpmC (if this protein is present). Lysylation is critical for the stimulatory effect of EF-P on peptide-bond formation. The lysylation moiety may extend toward the peptidyltransferase center and stabilize the terminal 3-CCA end of the tRNA. Hydroxylation of the C5 position on Lys-34 may allow additional potential stabilizing hydrogen-bond interactions with the P-tRNA.

Its subcellular location is the cytoplasm. The protein operates within protein biosynthesis; polypeptide chain elongation. Involved in peptide bond synthesis. Alleviates ribosome stalling that occurs when 3 or more consecutive Pro residues or the sequence PPG is present in a protein, possibly by augmenting the peptidyl transferase activity of the ribosome. Modification of Lys-34 is required for alleviation. The sequence is that of Elongation factor P from Stenotrophomonas maltophilia (strain K279a).